A 129-amino-acid chain; its full sequence is Glycine cleavage system H protein (129 aa).

A Lipoyl-binding domain is found at 24 to 106 (SYTVGITEHA…YGEGWFFRVM (83 aa)). Residue Lys65 is modified to N6-lipoyllysine.

Belongs to the GcvH family. The glycine cleavage system is composed of four proteins: P, T, L and H. It depends on (R)-lipoate as a cofactor.

In terms of biological role, the glycine cleavage system catalyzes the degradation of glycine. The H protein shuttles the methylamine group of glycine from the P protein to the T protein. This is Glycine cleavage system H protein from Shewanella baltica (strain OS155 / ATCC BAA-1091).